The chain runs to 505 residues: Cytochrome P450 9b2 (505 aa).

Heme is bound at residue Cys449.

This sequence belongs to the cytochrome P450 family. Requires heme as cofactor.

The protein resides in the endoplasmic reticulum membrane. Its subcellular location is the microsome membrane. Functionally, may be involved in the metabolism of insect hormones and in the breakdown of synthetic insecticides. This Drosophila melanogaster (Fruit fly) protein is Cytochrome P450 9b2 (Cyp9b2).